Consider the following 349-residue polypeptide: Hypoxia-inducible factor 1-alpha inhibitor (349 aa).

The segment covering Met1–Gly14 has biased composition (low complexity). Residues Met1–Arg51 form a disordered region. Ala2 carries the post-translational modification N-acetylalanine. The segment at Ala2–Phe125 is interaction with VHL. In terms of domain architecture, JmjC spans Glu142–Glu307. Tyr145 serves as a coordination point for 2-oxoglutarate. Residues Asp152 and Gln181–Thr183 contribute to the substrate site. Thr196 lines the 2-oxoglutarate pocket. His199 and Asp201 together coordinate Fe cation. Asp201–Gln203 serves as a coordination point for substrate. 2 residues coordinate 2-oxoglutarate: Asn205 and Lys214. Substrate is bound at residue Arg238 to Gln239. His279 lines the Fe cation pocket. Asn294 is a binding site for 2-oxoglutarate. The substrate site is built by Ala300 and Asn321.

In terms of assembly, homodimer; homodimerization is essential for catalytic activity. Interacts with VHL and HIF1A. Part of a complex with VHL, HIF1A and HDAC1 or HDAC2 or HDAC3. Interacts with NFKB1 and NFKBIA. Interacts with NOTCH1, NOTCH2 and NOTCH3 but not with NOTCH4. Interacts with ABPA3. Interacts with TNKS2. Interacts with PPP1R12A. Interacts with UBE3A. Interacts with ASB4. Interacts with ANKS3. Interacts with NECAB3; the interaction is indirect and seems to be mediated by APBA3. It depends on Fe(2+) as a cofactor.

It is found in the nucleus. Its subcellular location is the cytoplasm. The protein localises to the perinuclear region. The catalysed reaction is L-asparaginyl-[hypoxia-inducible factor alpha subunit] + 2-oxoglutarate + O2 = (3S)-3-hydroxy-L-asparaginyl-[hypoxia-inducible factor alpha subunit] + succinate + CO2. It carries out the reaction L-histidyl-[ankyrin-repeat domain protein] + 2-oxoglutarate + O2 = (3S)-3-hydroxy-L-histidyl-[ankyrin-repeat domain protein] + succinate + CO2. The enzyme catalyses L-asparaginyl-[ankyrin-repeat domain protein] + 2-oxoglutarate + O2 = (3S)-3-hydroxy-L-asparaginyl-[ankyrin-repeat domain protein] + succinate + CO2. It catalyses the reaction L-aspartyl-[ankyrin-repeat domain protein] + 2-oxoglutarate + O2 = (3S)-3-hydroxy-L-aspartyl-[ankyrin-repeat domain protein] + succinate + CO2. Its function is as follows. Hydroxylates HIF-1 alpha at 'Asn-799' in the C-terminal transactivation domain (CAD). Functions as an oxygen sensor and, under normoxic conditions, the hydroxylation prevents interaction of HIF-1 with transcriptional coactivators including Cbp/p300-interacting transactivator. Involved in transcriptional repression through interaction with HIF1A, VHL and histone deacetylases. Hydroxylates specific Asn residues within ankyrin repeat domains (ARD) of NFKB1, NFKBIA, NOTCH1, ASB4, PPP1R12A and several other ARD-containing proteins. Also hydroxylates Asp and His residues within ARDs of ANK1 and TNKS2, respectively. Negatively regulates NOTCH1 activity, accelerating myogenic differentiation. Positively regulates ASB4 activity, promoting vascular differentiation. This chain is Hypoxia-inducible factor 1-alpha inhibitor (Hif1an), found in Mus musculus (Mouse).